Reading from the N-terminus, the 239-residue chain is 1-(5-phosphoribosyl)-5-[(5-phosphoribosylamino)methylideneamino] imidazole-4-carboxamide isomerase (239 aa).

Asp-7 serves as the catalytic Proton acceptor. Asp-129 serves as the catalytic Proton donor.

It belongs to the HisA/HisF family.

It is found in the cytoplasm. It carries out the reaction 1-(5-phospho-beta-D-ribosyl)-5-[(5-phospho-beta-D-ribosylamino)methylideneamino]imidazole-4-carboxamide = 5-[(5-phospho-1-deoxy-D-ribulos-1-ylimino)methylamino]-1-(5-phospho-beta-D-ribosyl)imidazole-4-carboxamide. It functions in the pathway amino-acid biosynthesis; L-histidine biosynthesis; L-histidine from 5-phospho-alpha-D-ribose 1-diphosphate: step 4/9. In Lactiplantibacillus plantarum (strain ATCC BAA-793 / NCIMB 8826 / WCFS1) (Lactobacillus plantarum), this protein is 1-(5-phosphoribosyl)-5-[(5-phosphoribosylamino)methylideneamino] imidazole-4-carboxamide isomerase.